Consider the following 675-residue polypeptide: MTTAPQPKQSIFSPELVRGAVRASFAKLSPRDQARNPVMFVVYLGTALTAYLTVANLVTGKPWGYELAITLLLLLTVLFANFAEGMAEARGKAQAASLRSAREDVKARRLVNGQEELVAGTALERGDLVVVEAGEMIPADGEIVEGLASVDESAITGESAPVIREAGTDHSGVTGGTKVLSDRIVIQITSGAGESFLDRMIALVEGASRQKTPNEIALSILLSGLTLIFLLAVVTLYPFTVYAGAPASAVTLIALLVCLIPTTIGGLLPAIGIAGMDRALQANVIAKSGKAVEVAGDVDVLLLDKTGTITIGNRMATKFHPLPGVTEAELAKAALLSSLADPTPEGKSIVALARQLGVDAPEPAGAEFIEFTAQTRMSGVDFPGTSIRKGAGSRISALAQERGGQLPPELAAITDEVSRQGATPLTVIENDRLLGVVALSDIIKPGIRERFEQLRRMGLRTVMITGDNPLTAEAIAKEAGVDGFLAEATPEDKMEMIKQEQASGKLVAMMGDGTNDAPALAQADVGLAMNSGTQAAKEAGNMVDLDSDPTKLLEVVEIGKGLLITRGALTTFSIANDVAKYFAILPALFVTAYPQLGVLNVMGLHSPTSAVLSAVIFNALIIPVLIPLALRGVPYQPMSAGALLNRNLLVYGGGGILVPFIAIKLIDLLIGGLMS.

The next 4 membrane-spanning stretches (helical) occupy residues 38-58 (VMFV…ANLV), 67-87 (LAIT…EGMA), 216-236 (IALS…VVTL), and 253-273 (IALL…AIGI). The active-site 4-aspartylphosphate intermediate is the Asp304. Residues Asp341, Glu345, 371 to 378 (FTAQTRMS), and Lys389 each bind ATP. Asp512 and Asp516 together coordinate Mg(2+). Transmembrane regions (helical) follow at residues 582-602 (FAIL…LNVM), 610-630 (AVLS…PLAL), and 654-674 (GGIL…GGLM).

The protein belongs to the cation transport ATPase (P-type) (TC 3.A.3) family. Type IA subfamily. The system is composed of three essential subunits: KdpA, KdpB and KdpC.

It localises to the cell membrane. The catalysed reaction is K(+)(out) + ATP + H2O = K(+)(in) + ADP + phosphate + H(+). In terms of biological role, part of the high-affinity ATP-driven potassium transport (or Kdp) system, which catalyzes the hydrolysis of ATP coupled with the electrogenic transport of potassium into the cytoplasm. This subunit is responsible for energy coupling to the transport system and for the release of the potassium ions to the cytoplasm. This chain is Potassium-transporting ATPase ATP-binding subunit, found in Deinococcus radiodurans (strain ATCC 13939 / DSM 20539 / JCM 16871 / CCUG 27074 / LMG 4051 / NBRC 15346 / NCIMB 9279 / VKM B-1422 / R1).